Reading from the N-terminus, the 405-residue chain is S-adenosylmethionine synthase (405 aa).

An ATP-binding site is contributed by 141–146; it reads GQGSVD.

The protein belongs to the AdoMet synthase 2 family. Mg(2+) is required as a cofactor.

The enzyme catalyses L-methionine + ATP + H2O = S-adenosyl-L-methionine + phosphate + diphosphate. It functions in the pathway amino-acid biosynthesis; S-adenosyl-L-methionine biosynthesis; S-adenosyl-L-methionine from L-methionine: step 1/1. Functionally, catalyzes the formation of S-adenosylmethionine from methionine and ATP. The protein is S-adenosylmethionine synthase of Methanococcus maripaludis (strain C6 / ATCC BAA-1332).